The primary structure comprises 671 residues: DNA ligase (671 aa).

NAD(+)-binding positions include 32–36 (DAEYD), 81–82 (SL), and Glu113. Lys115 (N6-AMP-lysine intermediate) is an active-site residue. The NAD(+) site is built by Arg136, Glu173, Lys290, and Lys314. The Zn(2+) site is built by Cys408, Cys411, Cys426, and Cys432. In terms of domain architecture, BRCT spans 593–671 (EIDSPFAGKT…EAEMLRLLGS (79 aa)).

This sequence belongs to the NAD-dependent DNA ligase family. LigA subfamily. The cofactor is Mg(2+). It depends on Mn(2+) as a cofactor.

The catalysed reaction is NAD(+) + (deoxyribonucleotide)n-3'-hydroxyl + 5'-phospho-(deoxyribonucleotide)m = (deoxyribonucleotide)n+m + AMP + beta-nicotinamide D-nucleotide.. Functionally, DNA ligase that catalyzes the formation of phosphodiester linkages between 5'-phosphoryl and 3'-hydroxyl groups in double-stranded DNA using NAD as a coenzyme and as the energy source for the reaction. It is essential for DNA replication and repair of damaged DNA. The protein is DNA ligase of Shigella sonnei (strain Ss046).